The following is a 271-amino-acid chain: Acyl-[acyl-carrier-protein]--UDP-N-acetylglucosamine O-acyltransferase (271 aa).

The protein belongs to the transferase hexapeptide repeat family. LpxA subfamily. As to quaternary structure, homotrimer.

The protein localises to the cytoplasm. The enzyme catalyses a (3R)-hydroxyacyl-[ACP] + UDP-N-acetyl-alpha-D-glucosamine = a UDP-3-O-[(3R)-3-hydroxyacyl]-N-acetyl-alpha-D-glucosamine + holo-[ACP]. It functions in the pathway glycolipid biosynthesis; lipid IV(A) biosynthesis; lipid IV(A) from (3R)-3-hydroxytetradecanoyl-[acyl-carrier-protein] and UDP-N-acetyl-alpha-D-glucosamine: step 1/6. In terms of biological role, involved in the biosynthesis of lipid A, a phosphorylated glycolipid that anchors the lipopolysaccharide to the outer membrane of the cell. This is Acyl-[acyl-carrier-protein]--UDP-N-acetylglucosamine O-acyltransferase from Sulfurihydrogenibium sp. (strain YO3AOP1).